Reading from the N-terminus, the 353-residue chain is MNILGIETSCDETSAAVLSDGSVRSNIVSSQRCHTDFGGVVPELASREHERLIVSIVDAAITEANIAKNDLDVIAATAGPGLIGAVMVGLCFAEGLAWALGKPFVPVNHVEAHIFSPFISDEPGHREPKGDFVSLTVSGGHTLLSVVRQDLGYEVIGRTIDDAAGEAFDKTGKMLGLGYPAGPVIDRLAREGDSDFHRFPRALTASSQTSKSYRGNFDFSFSGLKTSVRTWLEAHDSEYVQKHQADLAASIQSAIVEVLVEKSVAAALLHKVNAISVAGGVSANSGLRSAMQAACDRHGIELFIPALAYSTDNAAMIATMAQLMIARGKYRIEDNSYGVAPFARFEAARKGAR.

Residues histidine 109 and histidine 113 each contribute to the Fe cation site. Substrate-binding positions include 136 to 140, aspartate 169, glycine 182, aspartate 186, and asparagine 284; that span reads TVSGG. Position 312 (aspartate 312) interacts with Fe cation.

The protein belongs to the KAE1 / TsaD family. It depends on Fe(2+) as a cofactor.

Its subcellular location is the cytoplasm. It carries out the reaction L-threonylcarbamoyladenylate + adenosine(37) in tRNA = N(6)-L-threonylcarbamoyladenosine(37) in tRNA + AMP + H(+). In terms of biological role, required for the formation of a threonylcarbamoyl group on adenosine at position 37 (t(6)A37) in tRNAs that read codons beginning with adenine. Is involved in the transfer of the threonylcarbamoyl moiety of threonylcarbamoyl-AMP (TC-AMP) to the N6 group of A37, together with TsaE and TsaB. TsaD likely plays a direct catalytic role in this reaction. The polypeptide is tRNA N6-adenosine threonylcarbamoyltransferase (Chlorobaculum tepidum (strain ATCC 49652 / DSM 12025 / NBRC 103806 / TLS) (Chlorobium tepidum)).